Here is a 363-residue protein sequence, read N- to C-terminus: Teichoic acids export ATP-binding protein TagH (363 aa).

The 220-residue stretch at 27 to 246 (KHFFNIGNVD…YRKFSKDFKA (220 aa)) folds into the ABC transporter domain. ATP is bound at residue 60–67 (GINGSGKS). Positions 247-363 (QTAAYRKKYQ…KSQSVLFNSK (117 aa)) are unknown.

This sequence belongs to the ABC transporter superfamily. Teichoic acids exporter (TC 3.A.1.104.1) family. In terms of assembly, the complex is composed of two ATP-binding proteins (TagH) and two transmembrane proteins (TagG).

The protein resides in the cell membrane. It carries out the reaction ATP + H2O + teichoic acidSide 1 = ADP + phosphate + teichoic acidSide 2.. In terms of biological role, part of the ABC transporter complex TagGH involved in teichoic acids export. Responsible for energy coupling to the transport system. The sequence is that of Teichoic acids export ATP-binding protein TagH from Lactiplantibacillus plantarum (strain ATCC BAA-793 / NCIMB 8826 / WCFS1) (Lactobacillus plantarum).